A 156-amino-acid polypeptide reads, in one-letter code: Transcription elongation factor GreA (156 aa).

Residues 46-66 are a coiled coil; the sequence is AEYHSAREKQSFIEGRIKELE.

Belongs to the GreA/GreB family.

Necessary for efficient RNA polymerase transcription elongation past template-encoded arresting sites. The arresting sites in DNA have the property of trapping a certain fraction of elongating RNA polymerases that pass through, resulting in locked ternary complexes. Cleavage of the nascent transcript by cleavage factors such as GreA or GreB allows the resumption of elongation from the new 3'terminus. GreA releases sequences of 2 to 3 nucleotides. The protein is Transcription elongation factor GreA of Ruegeria pomeroyi (strain ATCC 700808 / DSM 15171 / DSS-3) (Silicibacter pomeroyi).